Here is a 292-residue protein sequence, read N- to C-terminus: Glutamyl-Q tRNA(Asp) synthetase (292 aa).

L-glutamate is bound by residues 11–15 (RFAPS) and glutamate 47. The 'HIGH' region signature appears at 14–24 (PSPTGPLHFGS). 4 residues coordinate Zn(2+): cysteine 103, cysteine 105, tyrosine 116, and cysteine 120. Residues tyrosine 173 and arginine 191 each coordinate L-glutamate. A 'KMSKS' region motif is present at residues 229–233 (KLSKQ). ATP is bound at residue lysine 232.

This sequence belongs to the class-I aminoacyl-tRNA synthetase family. GluQ subfamily. Requires Zn(2+) as cofactor.

Functionally, catalyzes the tRNA-independent activation of glutamate in presence of ATP and the subsequent transfer of glutamate onto a tRNA(Asp). Glutamate is transferred on the 2-amino-5-(4,5-dihydroxy-2-cyclopenten-1-yl) moiety of the queuosine in the wobble position of the QUC anticodon. This is Glutamyl-Q tRNA(Asp) synthetase from Acinetobacter baylyi (strain ATCC 33305 / BD413 / ADP1).